A 506-amino-acid polypeptide reads, in one-letter code: MNTMTLTPGQLSLSQLYDIWRHPVQLRLDASAIDGINASVACVNDIVAEGRTAYGINTGFGLLAQTRIADEDLQNLQRSLVLSHAAGVGDPLDDAMVRLIMVLKINSLARGFSGIRLSVIEALIALVNAGVYPLIPAKGSVGASGDLAPLAHLSLTLLGEGKARWQGEWLPAQTALKKAGLEPVALAAKEGLALLNGTQASTAFALRGLFEAQELFASAVVCGALTTEAVLGSRRPFDARIHAARGQQGQIDVARLFRHLLTDTSAIAESHHHCHKVQDPYSLRCQPQVMGACLTQLRQTKEVLLAEANAVSDNPLVFADAGEVISGGNFHAEPVAMAADNLALAIAEIGALSERRIALMMDKHMSQLPPFLVKNGGVNSGFMIAQVTAAALASENKALAHPHSVDSLPTSANQEDHVSMAPAAGRRLWEMAANTRGIIAVEWLAACQGIDLREGLTSSPLLEQARQTLREQVAHYTQDRFFAPDIECATALLAQGALQRLVPDFM.

Positions 143 to 145 (ASG) form a cross-link, 5-imidazolinone (Ala-Gly). Ser144 carries the 2,3-didehydroalanine (Ser) modification.

The protein belongs to the PAL/histidase family. Contains an active site 4-methylidene-imidazol-5-one (MIO), which is formed autocatalytically by cyclization and dehydration of residues Ala-Ser-Gly.

The protein resides in the cytoplasm. The enzyme catalyses L-histidine = trans-urocanate + NH4(+). The protein operates within amino-acid degradation; L-histidine degradation into L-glutamate; N-formimidoyl-L-glutamate from L-histidine: step 1/3. The chain is Histidine ammonia-lyase from Salmonella typhimurium (strain LT2 / SGSC1412 / ATCC 700720).